Reading from the N-terminus, the 379-residue chain is NuA4 complex subunit EAF3 homolog (379 aa).

The 56-residue stretch at 6 to 61 (EENEKVLVHHQNRIYEAKIIKVDPKTSKSDKKKPLYFIHYLGWKEKWNEWIEPNKI) folds into the Tudor-knot domain. Residues 75–212 (TNIKASTTSL…KRNDSKSSHF (138 aa)) form a disordered region. Low complexity predominate over residues 78–87 (KASTTSLNNK). Acidic residues predominate over residues 111-141 (ENSDEDENESELEDGGGEDADEGGEDIEDQE). Positions 165–199 (SSSSSSSSKSNNNNNNNNNNNNNNNNNNNNNNNNN) are enriched in low complexity. An MRG domain is found at 214–377 (STKFIDIEIP…ASSPYLKAAS (164 aa)).

As to quaternary structure, component of the NuA4 histone acetyltransferase complex.

The protein resides in the nucleus. Its function is as follows. Component of the NuA4 histone acetyltransferase complex which is involved in transcriptional activation of selected genes principally by acetylation of nucleosomal histone H4 and H2A. The NuA4 complex is also involved in DNA repair. Also a component of a complex which acts to repress transcription by deacetylation of nucleosomal histones. This is NuA4 complex subunit EAF3 homolog from Dictyostelium discoideum (Social amoeba).